The primary structure comprises 623 residues: Kelch-like protein diablo (623 aa).

Residues 1-54 (MGDLPGSGSTAQPRDAAVTGTGGNSTAGGGSSVGSTAVDRPPSPARLSHTSEKH) form a disordered region. A Phosphothreonine modification is found at T19. The span at 20–32 (GTGGNSTAGGGSS) shows a compositional bias: gly residues. Positions 72–139 (CDVVLNVGGR…CYTAHIIVEE (68 aa)) constitute a BTB domain. The 103-residue stretch at 174–276 (CLGIRAFADT…SPKFLVGTVG (103 aa)) folds into the BACK domain. Kelch repeat units lie at residues 323 to 369 (VLFA…VLND), 371 to 417 (LYAV…VLDG), 418 to 464 (FLYA…VLGG), 466 to 511 (LYAI…VFNN), 513 to 558 (IYAV…VVNG), and 559 to 605 (QLYA…VMRA).

Its pathway is protein modification; protein ubiquitination. Probable substrate-specific adapter of an E3 ubiquitin-protein ligase complex which mediates the ubiquitination and subsequent proteasomal degradation of target proteins. May have a role in synapse differentiation and growth. This is Kelch-like protein diablo from Drosophila melanogaster (Fruit fly).